The sequence spans 508 residues: MKLAYWMYAGPAHIGTLRIASSFKNVHAIMHAPLGDDYFNVMRSMLERERDFTPVTASIVDRNVLARGSQEKVVNNIVRKDGEERPDLIVLTPTCTSSILQEDLANFVERAQMDAQGDVLLADVNHYRYNELQAADRTLHQIVKFYLEKARKKEQLPQGKTENPSVNIIGISTLGFHNQHDCRELKQLMKDLGIEVNEVIPDGASVHNLKNLPKAWFNLVPYRELGLTTAQYLEEEFNLPYVDITPMGVVETARCIRKIQQIINEQGTNVDYEEYINNQTLYVSQAAWFSRSIDCQNLTGKKAVVFGDNTHAAAITKILAREMGIHVVLAGTYCKYDADWFKEQVSEYCDEVLISDDNGEIGDAIARIEPSAIFGTQMERHVGKRLDIPCGVIAAPIHIQNFPIGYKPFCGYEGTNQIADLVYNSFTLGMEDHLLEIFGGHDTKEVITKGISADSDLNWNKEAQAELNKVPGFVRGKVKRNTEKFARERGFSEISLEVMYAAKEAVGA.

Residue Asp36 coordinates [4Fe-4S] cluster. Asp294 (proton donor) is an active-site residue. 429–430 contributes to the substrate binding site; it reads GM.

Belongs to the ChlB/BchB/BchZ family. As to quaternary structure, protochlorophyllide reductase is composed of three subunits; ChlL, ChlN and ChlB. Forms a heterotetramer of two ChlB and two ChlN subunits. [4Fe-4S] cluster serves as cofactor.

The enzyme catalyses chlorophyllide a + oxidized 2[4Fe-4S]-[ferredoxin] + 2 ADP + 2 phosphate = protochlorophyllide a + reduced 2[4Fe-4S]-[ferredoxin] + 2 ATP + 2 H2O. Its pathway is porphyrin-containing compound metabolism; chlorophyll biosynthesis (light-independent). In terms of biological role, component of the dark-operative protochlorophyllide reductase (DPOR) that uses Mg-ATP and reduced ferredoxin to reduce ring D of protochlorophyllide (Pchlide) to form chlorophyllide a (Chlide). This reaction is light-independent. The NB-protein (ChlN-ChlB) is the catalytic component of the complex. This chain is Light-independent protochlorophyllide reductase subunit B, found in Crocosphaera subtropica (strain ATCC 51142 / BH68) (Cyanothece sp. (strain ATCC 51142)).